Reading from the N-terminus, the 321-residue chain is Glucokinase (321 aa).

Position 8 to 13 (8 to 13 (GDVGGT)) interacts with ATP.

Belongs to the bacterial glucokinase family.

It is found in the cytoplasm. The catalysed reaction is D-glucose + ATP = D-glucose 6-phosphate + ADP + H(+). This is Glucokinase from Klebsiella pneumoniae subsp. pneumoniae (strain ATCC 700721 / MGH 78578).